Reading from the N-terminus, the 623-residue chain is NADPH-dependent diflavin oxidoreductase 1 (623 aa).

Residues 8 to 153 form the Flavodoxin-like domain; it reads LLVLYASQTG…TLDPWMLSLW (146 aa). Residues 14 to 19, 62 to 65, and Asp-135 contribute to the FMN site; these read SQTGNA and STTG. Residues 221 to 467 enclose the FAD-binding FR-type domain; it reads KPDCFLKMTR…SLPAPSQSLP (247 aa). FAD-binding positions include Arg-369, 399-402, and 433-436; these read RAFS and GLCS. Residues Thr-475, 541–542, 547–551, and Asp-583 each bind NADP(+); these read SR and KVYVQ. Trp-622 is a binding site for FAD.

Belongs to the NADPH-dependent diflavin oxidoreductase NDOR1 family. This sequence in the N-terminal section; belongs to the flavodoxin family. It in the C-terminal section; belongs to the flavoprotein pyridine nucleotide cytochrome reductase family. As to quaternary structure, interacts with At5g18400. The cofactor is FAD. Requires FMN as cofactor. In terms of tissue distribution, widely expressed.

The protein resides in the cytoplasm. The protein localises to the nucleus. The enzyme catalyses 2 oxidized [2Fe-2S]-[protein] + NADPH = 2 reduced [2Fe-2S]-[protein] + NADP(+) + H(+). NADPH-dependent reductase which is a central component of the cytosolic iron-sulfur (Fe-S) protein assembly (CIA) machinery. Transfers electrons from NADPH via its FAD and FMN prosthetic groups to the [2Fe-2S] cluster of the anamorsin/DRE2 homolog, another key component of the CIA machinery. In turn, this reduced cluster provides electrons for assembly of cytosolic iron-sulfur cluster proteins. Catalyzes the NADP-dependent reduction of cytochrome c, but not cytochrome P450 in vitro. Required for embryo development. The chain is NADPH-dependent diflavin oxidoreductase 1 (ATR3) from Arabidopsis thaliana (Mouse-ear cress).